Consider the following 247-residue polypeptide: 5'-nucleotidase SurE (247 aa).

Residues Asp-8, Asp-9, Ser-39, and Asn-91 each contribute to the a divalent metal cation site.

It belongs to the SurE nucleotidase family. A divalent metal cation serves as cofactor.

It localises to the cytoplasm. The enzyme catalyses a ribonucleoside 5'-phosphate + H2O = a ribonucleoside + phosphate. In terms of biological role, nucleotidase that shows phosphatase activity on nucleoside 5'-monophosphates. The chain is 5'-nucleotidase SurE from Chromobacterium violaceum (strain ATCC 12472 / DSM 30191 / JCM 1249 / CCUG 213 / NBRC 12614 / NCIMB 9131 / NCTC 9757 / MK).